The primary structure comprises 425 residues: Dihydroorotase (425 aa).

Residues histidine 60 and histidine 62 each coordinate Zn(2+). Substrate contacts are provided by residues 62–64 (HLR) and asparagine 94. 3 residues coordinate Zn(2+): aspartate 152, histidine 179, and histidine 232. Residue asparagine 278 coordinates substrate. Aspartate 305 contributes to the Zn(2+) binding site. Aspartate 305 is an active-site residue. Histidine 309 serves as a coordination point for substrate.

This sequence belongs to the metallo-dependent hydrolases superfamily. DHOase family. Class I DHOase subfamily. It depends on Zn(2+) as a cofactor.

The catalysed reaction is (S)-dihydroorotate + H2O = N-carbamoyl-L-aspartate + H(+). It functions in the pathway pyrimidine metabolism; UMP biosynthesis via de novo pathway; (S)-dihydroorotate from bicarbonate: step 3/3. In terms of biological role, catalyzes the reversible cyclization of carbamoyl aspartate to dihydroorotate. This is Dihydroorotase from Syntrophotalea carbinolica (strain DSM 2380 / NBRC 103641 / GraBd1) (Pelobacter carbinolicus).